A 389-amino-acid polypeptide reads, in one-letter code: Succinate--CoA ligase [ADP-forming] subunit beta (389 aa).

The ATP-grasp domain maps to 9 to 236 (KELFAKHGVP…RDATDPLELK (228 aa)). ATP-binding positions include lysine 45, 52–54 (GRG), serine 94, and glutamate 99. Residues asparagine 191 and aspartate 205 each contribute to the Mg(2+) site. Residues asparagine 256 and 318-320 (GIT) each bind substrate.

It belongs to the succinate/malate CoA ligase beta subunit family. In terms of assembly, heterotetramer of two alpha and two beta subunits. Mg(2+) is required as a cofactor.

The catalysed reaction is succinate + ATP + CoA = succinyl-CoA + ADP + phosphate. It carries out the reaction GTP + succinate + CoA = succinyl-CoA + GDP + phosphate. It functions in the pathway carbohydrate metabolism; tricarboxylic acid cycle; succinate from succinyl-CoA (ligase route): step 1/1. In terms of biological role, succinyl-CoA synthetase functions in the citric acid cycle (TCA), coupling the hydrolysis of succinyl-CoA to the synthesis of either ATP or GTP and thus represents the only step of substrate-level phosphorylation in the TCA. The beta subunit provides nucleotide specificity of the enzyme and binds the substrate succinate, while the binding sites for coenzyme A and phosphate are found in the alpha subunit. The protein is Succinate--CoA ligase [ADP-forming] subunit beta of Rhodococcus erythropolis (strain PR4 / NBRC 100887).